Consider the following 126-residue polypeptide: MPKSKELVSSSSSASDSDSEVDKKAKRKKQAAPEKPVKKQKTGESSKGAASSKQSSNRDENMFQIGKMRYVSVRDFKGKVLIDIREYWMDQEGEMKPGRKGISLNPEQWNQLKEQISDIDDAVRKL.

Residues M1 to F63 form a disordered region. Positions P2–A50 are regulatory. Low complexity predominate over residues L7–D16. The span at A31–E44 shows a compositional bias: basic and acidic residues. The span at S45–S55 shows a compositional bias: low complexity. An interaction with ssDNA region spans residues F76–K100.

Belongs to the transcriptional coactivator PC4 family.

It is found in the nucleus. Functionally, general coactivator that functions cooperatively with TAFs and mediates functional interactions between upstream activators and the general transcriptional machinery. May be involved in stabilizing the multiprotein transcription complex. Binds single-stranded DNA. Also binds, in vitro, non-specifically to double-stranded DNA (ds DNA). This Gallus gallus (Chicken) protein is Activated RNA polymerase II transcriptional coactivator p15 (SUB1).